Reading from the N-terminus, the 178-residue chain is Large ribosomal subunit protein uL10 (178 aa).

Belongs to the universal ribosomal protein uL10 family. As to quaternary structure, part of the ribosomal stalk of the 50S ribosomal subunit. The N-terminus interacts with L11 and the large rRNA to form the base of the stalk. The C-terminus forms an elongated spine to which L12 dimers bind in a sequential fashion forming a multimeric L10(L12)X complex.

Its function is as follows. Forms part of the ribosomal stalk, playing a central role in the interaction of the ribosome with GTP-bound translation factors. In Dictyoglomus turgidum (strain DSM 6724 / Z-1310), this protein is Large ribosomal subunit protein uL10.